Consider the following 582-residue polypeptide: ATP-dependent lipid A-core flippase (582 aa).

5 consecutive transmembrane segments (helical) span residues 16–36, 63–83, 153–173, 253–273, and 275–295; these read LWPMISPFKTGLIVAAIALIL, ILVWMPLVVIGLMVLRGVSGF, IIGLFAMMFYYSWQLSLILVV, PLIQFIASLALAFVLYAASFP, and VMETLTAGTITVVFSSMIALM. In terms of domain architecture, ABC transmembrane type-1 spans 28 to 310; sequence IVAAIALILN…LTNVNAQFQR (283 aa). The region spanning 342–578 is the ABC transporter domain; the sequence is IAFDHVTFSY…QGVYAQLHQL (237 aa). 376–383 serves as a coordination point for ATP; that stretch reads GRSGSGKS.

The protein belongs to the ABC transporter superfamily. Lipid exporter (TC 3.A.1.106) family. Homodimer.

Its subcellular location is the cell inner membrane. It carries out the reaction ATP + H2O + lipid A-core oligosaccharideSide 1 = ADP + phosphate + lipid A-core oligosaccharideSide 2.. In terms of biological role, involved in lipopolysaccharide (LPS) biosynthesis. Translocates lipid A-core from the inner to the outer leaflet of the inner membrane. Transmembrane domains (TMD) form a pore in the inner membrane and the ATP-binding domain (NBD) is responsible for energy generation. In Sodalis glossinidius (strain morsitans), this protein is ATP-dependent lipid A-core flippase.